The primary structure comprises 341 residues: Serpentine receptor class epsilon-12 (341 aa).

7 consecutive transmembrane segments (helical) span residues 30–50 (TAFYVADTINMMFYIWVLFSA), 57–77 (FTLVSGTQYVIHFFDNLAIIV), 101–121 (AMTFSVYCIVAAMCSLPFSIL), 140–160 (YISYALVFLLNFIGIIGAILL), 167–187 (IFVVAFLMILNLFALLTNQFL), 230–250 (LNFIILYMGFMNVCLVISVLF), and 262–282 (ICSLALDASIFFYSFAIPQIM).

The protein belongs to the nematode receptor-like protein sre family.

The protein localises to the membrane. In Caenorhabditis elegans, this protein is Serpentine receptor class epsilon-12 (sre-12).